Reading from the N-terminus, the 361-residue chain is GDSL esterase/lipase At4g18970 (361 aa).

The signal sequence occupies residues 1 to 22; the sequence is MARVCVMMMAMAIAMAMNIAMG. Serine 35 serves as the catalytic Nucleophile. Active-site residues include aspartate 325 and histidine 328.

This sequence belongs to the 'GDSL' lipolytic enzyme family.

It is found in the secreted. This chain is GDSL esterase/lipase At4g18970, found in Arabidopsis thaliana (Mouse-ear cress).